Reading from the N-terminus, the 198-residue chain is Segregation and condensation protein B (198 aa).

Positions 169-198 are disordered; the sequence is LADPAAEEPDQNEMDLFFDRFNQSKEQEEE.

The protein belongs to the ScpB family. In terms of assembly, homodimer. Homodimerization may be required to stabilize the binding of ScpA to the Smc head domains. Component of a cohesin-like complex composed of ScpA, ScpB and the Smc homodimer, in which ScpA and ScpB bind to the head domain of Smc. The presence of the three proteins is required for the association of the complex with DNA.

Its subcellular location is the cytoplasm. Functionally, participates in chromosomal partition during cell division. May act via the formation of a condensin-like complex containing Smc and ScpA that pull DNA away from mid-cell into both cell halves. The sequence is that of Segregation and condensation protein B from Listeria monocytogenes serotype 4a (strain HCC23).